We begin with the raw amino-acid sequence, 65 residues long: Large ribosomal subunit protein uL29 (65 aa).

The protein belongs to the universal ribosomal protein uL29 family.

This chain is Large ribosomal subunit protein uL29, found in Thioalkalivibrio sulfidiphilus (strain HL-EbGR7).